The primary structure comprises 140 residues: L-fucose mutarotase (140 aa).

H22 functions as the Proton donor in the catalytic mechanism. Substrate-binding positions include D30, R107, and 129 to 131; that span reads YGN.

This sequence belongs to the RbsD / FucU family. FucU mutarotase subfamily. In terms of assembly, homodecamer.

Its subcellular location is the cytoplasm. The enzyme catalyses alpha-L-fucose = beta-L-fucose. Its pathway is carbohydrate metabolism; L-fucose metabolism. In terms of biological role, involved in the anomeric conversion of L-fucose. The chain is L-fucose mutarotase from Shigella boydii serotype 18 (strain CDC 3083-94 / BS512).